Consider the following 157-residue polypeptide: Oocyte zinc finger protein XlCOF2 (157 aa).

5 C2H2-type zinc fingers span residues 6-28 (FTCT…MRIH), 34-56 (YSCA…QKNP), 79-101 (FTCT…QRLH), 107-129 (FSCA…QNTH), and 135-157 (FTCT…QKIH).

Belongs to the krueppel C2H2-type zinc-finger protein family.

The protein localises to the nucleus. May be involved in transcriptional regulation. The chain is Oocyte zinc finger protein XlCOF2 from Xenopus laevis (African clawed frog).